Consider the following 180-residue polypeptide: MDLINFIKICHLLYDRKYVVGSGGNVSIRDGNHIYITPTGSILGFLNEEDVCIVDLNGNIIKGKPTSELNMHLKIYQNKDCVNAIVHTHSMYCTAFSALDKKLELFTPEAEIVVKKIAYVDYSPCGSLELAENVSSCVEDSIILKNHGIVTVGKDITEAYVKTEVLEEIAQLNYIINNLK.

Residues 24-25, 39-40, and 66-67 contribute to the substrate site; these read GN, TG, and TS. The Proton donor/acceptor role is filled by Glu-68. The Zn(2+) site is built by Glu-68, His-87, His-89, and His-147.

It belongs to the aldolase class II family. AraD/FucA subfamily. In terms of assembly, homotetramer. Zn(2+) is required as a cofactor.

The catalysed reaction is L-fuculose 1-phosphate = (S)-lactaldehyde + dihydroxyacetone phosphate. It functions in the pathway cofactor biosynthesis; coenzyme F420 biosynthesis. Its function is as follows. Involved in the biosynthesis of the coenzyme F420 which requires phospholactate produced via the aldol cleavage of L-fuculose 1-phosphate and the NAD(+)-dependent oxidation of (S)-lactaldehyde. Catalyzes the reversible cleavage of L-fuculose 1-phosphate (Fuc1P) to yield dihydroxyacetone phosphate (DHAP) and S-lactaldehyde. The protein is L-fuculose phosphate aldolase (fucA) of Methanococcus maripaludis (strain C7 / ATCC BAA-1331).